The sequence spans 73 residues: Sec-independent protein translocase protein TatA (73 aa).

The chain crosses the membrane as a helical span at residues 1–21 (MGSFSIWHWLIVLVIVMLVFG). The interval 43-73 (MKEGDDKAAPAKELRDSTTIDVDAKEKTRQQ) is disordered.

This sequence belongs to the TatA/E family. In terms of assembly, the Tat system comprises two distinct complexes: a TatABC complex, containing multiple copies of TatA, TatB and TatC subunits, and a separate TatA complex, containing only TatA subunits. Substrates initially bind to the TatABC complex, which probably triggers association of the separate TatA complex to form the active translocon.

The protein localises to the cell inner membrane. Its function is as follows. Part of the twin-arginine translocation (Tat) system that transports large folded proteins containing a characteristic twin-arginine motif in their signal peptide across membranes. TatA could form the protein-conducting channel of the Tat system. The chain is Sec-independent protein translocase protein TatA from Cupriavidus pinatubonensis (strain JMP 134 / LMG 1197) (Cupriavidus necator (strain JMP 134)).